The primary structure comprises 65 residues: Large ribosomal subunit protein uL30 (65 aa).

The protein belongs to the universal ribosomal protein uL30 family. Part of the 50S ribosomal subunit.

In Rickettsia bellii (strain OSU 85-389), this protein is Large ribosomal subunit protein uL30.